A 77-amino-acid chain; its full sequence is TSC22 domain family protein 3 (77 aa).

An N-acetylmethionine modification is found at Met-1. Residues 19-40 (LKEQIRELVEKNSQLERENTLL) form a leucine-zipper region. The tract at residues 41 to 77 (KTLASPEQLEKFQSRLSPEEPAPETPEAPEAPGGSAV) is disordered. Position 45 is a phosphoserine (Ser-45). Residues 68–77 (APEAPGGSAV) are compositionally biased toward low complexity.

It belongs to the TSC-22/Dip/Bun family. As to quaternary structure, can form homodimers, however it is likely to function as a monomer. Interacts with AP1 and NFKB1. Interacts with MYOD1. Interacts with HDAC1; this interaction affects HDAC1 activity on MYOG promoter and thus inhibits MYOD1 transcriptional activity.

It localises to the cytoplasm. The protein localises to the nucleus. Protects T-cells from IL2 deprivation-induced apoptosis through the inhibition of FOXO3A transcriptional activity that leads to the down-regulation of the pro-apoptotic factor BCL2L11. In macrophages, plays a role in the anti-inflammatory and immunosuppressive effects of glucocorticoids and IL10. In T-cells, inhibits anti-CD3-induced NFKB1 nuclear translocation. In vitro, suppresses AP1 and NFKB1 DNA-binding activities. Inhibits myogenic differentiation and mediates anti-myogenic effects of glucocorticoids by binding and regulating MYOD1 and HDAC1 transcriptional activity resulting in reduced expression of MYOG. The chain is TSC22 domain family protein 3 (TSC22D3) from Sus scrofa (Pig).